The following is a 423-amino-acid chain: Galactosylceramide sulfotransferase (423 aa).

Over 1–14 (MLPPQKKPWESMAK) the chain is Cytoplasmic. Residues 15 to 35 (GLVLGALFTSFLLLVYSYAVP) traverse the membrane as a helical; Signal-anchor for type II membrane protein segment. The Lumenal segment spans residues 36–423 (PLHAGLASTT…WKFIRDFLRW (388 aa)). Residues Asn66 and Asn312 are each glycosylated (N-linked (GlcNAc...) asparagine).

This sequence belongs to the galactose-3-O-sulfotransferase family. Expressed in kidney proximal tubule, gastric mucosa and adenocarcinoma. Highly expressed in renal cell carcinoma cell lines.

It is found in the golgi apparatus membrane. It catalyses the reaction a beta-D-galactosyl-(1&lt;-&gt;1')-N-acylsphing-4-enine + 3'-phosphoadenylyl sulfate = an N-acyl-1-beta-D-(3-O-sulfo)-galactosyl-sphing-4-enine + adenosine 3',5'-bisphosphate + H(+). The catalysed reaction is a 1-O-alkyl-2-acyl-3-O-(beta-D-galactosyl)-sn-glycerol + 3'-phosphoadenylyl sulfate = a 1-O-alkyl-2-acyl-3-(beta-D-3-sulfogalactosyl)-sn-glycerol + adenosine 3',5'-bisphosphate + H(+). The enzyme catalyses a beta-D-Gal-(1&lt;-&gt;1')-ceramide + 3'-phosphoadenylyl sulfate = 1-(3-O-sulfo-beta-D-galactosyl)-ceramide + adenosine 3',5'-bisphosphate + H(+). It carries out the reaction a 1,2-diacyl-3-O-(beta-D-galactosyl)-sn-glycerol + 3'-phosphoadenylyl sulfate = 1,2-diacyl-3-(3-O-sulfo-beta-D-galactosyl)-sn-glycerol + adenosine 3',5'-bisphosphate + H(+). It catalyses the reaction a beta-D-Gal-(1-&gt;4)-beta-D-Glc-(1&lt;-&gt;1)-Cer(d18:1(4E)) + 3'-phosphoadenylyl sulfate = beta-D-3-sulfogalactosyl-(1-&gt;4)-beta-D-glucosyl-(1&lt;-&gt;1')-N-acylsphing-4-enine + adenosine 3',5'-bisphosphate + H(+). The protein operates within lipid metabolism; sphingolipid metabolism. Its function is as follows. Catalyzes the transfer of a sulfate group to position 3 of non-reducing beta-galactosyl residues in glycerolipids and sphingolipids, therefore participates in the biosynthesis of sulfoglycolipids. Catalyzes the synthesis of galactosylceramide sulfate (sulfatide), a major lipid component of the myelin sheath and of monogalactosylalkylacylglycerol sulfate (seminolipid), present in spermatocytes. Seems to prefer beta-glycosides at the non-reducing termini of sugar chains attached to a lipid moiety. Also acts on lactosylceramide, galactosyl 1-alkyl-2-sn-glycerol and galactosyl diacylglycerol (in vitro). In Homo sapiens (Human), this protein is Galactosylceramide sulfotransferase.